The chain runs to 375 residues: tRNA-specific 2-thiouridylase MnmA (375 aa).

Residues 20–27 (AMSGGVDS) and L46 contribute to the ATP site. C114 serves as the catalytic Nucleophile. A disulfide bond links C114 and C211. G138 lines the ATP pocket. Residues 160–162 (RDQ) form an interaction with tRNA region. The active-site Cysteine persulfide intermediate is the C211.

It belongs to the MnmA/TRMU family.

Its subcellular location is the cytoplasm. It catalyses the reaction S-sulfanyl-L-cysteinyl-[protein] + uridine(34) in tRNA + AH2 + ATP = 2-thiouridine(34) in tRNA + L-cysteinyl-[protein] + A + AMP + diphosphate + H(+). Functionally, catalyzes the 2-thiolation of uridine at the wobble position (U34) of tRNA, leading to the formation of s(2)U34. The sequence is that of tRNA-specific 2-thiouridylase MnmA from Ruegeria pomeroyi (strain ATCC 700808 / DSM 15171 / DSS-3) (Silicibacter pomeroyi).